A 269-amino-acid chain; its full sequence is Tryptophan synthase alpha chain (269 aa).

Active-site proton acceptor residues include Glu49 and Asp60.

The protein belongs to the TrpA family. As to quaternary structure, tetramer of two alpha and two beta chains.

It carries out the reaction (1S,2R)-1-C-(indol-3-yl)glycerol 3-phosphate + L-serine = D-glyceraldehyde 3-phosphate + L-tryptophan + H2O. It participates in amino-acid biosynthesis; L-tryptophan biosynthesis; L-tryptophan from chorismate: step 5/5. The alpha subunit is responsible for the aldol cleavage of indoleglycerol phosphate to indole and glyceraldehyde 3-phosphate. This chain is Tryptophan synthase alpha chain, found in Cronobacter sakazakii (strain ATCC BAA-894) (Enterobacter sakazakii).